Here is a 247-residue protein sequence, read N- to C-terminus: Transmembrane protein 33 (247 aa).

N-acetylalanine is present on alanine 2. At 2–31 the chain is on the lumenal side; that stretch reads ADTTPNGPQGAGAVQFMMTNKLDTAMWLSR. A helical membrane pass occupies residues 32 to 52; it reads LFTVYCSALFVLPLLGLHEAA. Topologically, residues 53–100 are cytoplasmic; the sequence is SFYQRALLANALTSALRLHQRLPHFQLSRAFLAQALLEDSCHYLLYSL. The helical transmembrane segment at 101–121 threads the bilayer; sequence IFVNSYPVTMSIFPVLLFSLL. Residues 122–155 are Lumenal-facing; that stretch reads HAATYTKKVLDAKGSNSLPLLRSFLDKLSTNQQN. Residues 156–176 form a helical membrane-spanning segment; sequence ILKFIACNEIFLMPATVFMLF. The Cytoplasmic portion of the chain corresponds to 177–247; it reads SGQGSLLQPF…FISRLAPTVA (71 aa).

It belongs to the PER33/POM33 family. Interacts with EIF2AK3. Interacts with RTN1, RTN2, RTN3, RTN4 and ARL6IP1. Interacts with RNF5. Interacts with RNF26. Interacts with PKD2.

The protein localises to the endoplasmic reticulum membrane. Its subcellular location is the melanosome. It localises to the nucleus envelope. Its function is as follows. Acts as a regulator of the tubular endoplasmic reticulum (ER) network by modulating intracellular calcium homeostasis. Mechanistically, stimulates PKD2 calcium-dependent activity. Suppresses the RTN3/4-induced formation of the ER tubules. Positively regulates PERK-mediated and IRE1-mediated unfolded protein response signaling. Plays an essential role in VEGF-mediated release of Ca(2+) from ER stores during angiogenesis. Also plays a role in the modulation of innate immune signaling through the cGAS-STING pathway by interacting with RNF26. Participates in lipid metabolism by acting as a downstream effector of the pyruvate kinase/PKM. Forms a complex with RNF5 to facilitate polyubiquitination and subsequent degradation of SCAP on the ER membrane. The sequence is that of Transmembrane protein 33 (Tmem33) from Mus musculus (Mouse).